The sequence spans 790 residues: MYKSLFFCLKIFAVLILVGCGITAYIIYHYSRDLPDYSQLARYYPPSVTRIYSHDGKLMEEYAFERRVFVPINSIPSSLIESFIAAEDKNFYNHPGVDLLGIVRAAFLNISNYLHHRRMEGASTITQQVVKNFLLTNEVSLERKIKEAILSYMISRVFTKEQILELYLNQTFFGRGAYGVAAAAQNYFNKSVEELTIAESAFIAALPKAPSELNPERNYARVKARRDYVIARMFEDGYITKDAAKEAMDSPIVLRKRAKEETVTADYYAAQVREEVIRMLNSKEEFYTGGLTIITSLDAKMQQLAENSLRKGLREFDRRRGFRKPIANIPLDNWQEEIKKLPSPPSLLEYKLAVVLDVADNHAEIGLIDGSKSKILIAEMKWARSNLKSVKTLLKKGDVIVVEPIKDGYALRQIPEVNGAIMVMNPNTGQVLASVGGYDFSTSKFDRVTQALRQPGSLSKTFVYLAALENGIKPNQIFNDGPIEISQGPGMPSWRPKNYEGKFLGEITMRTGLEKSCNLITVRVATAVGLTKIVDIIKRFGINNEPKKVYSMVLGSIETTLSRMTNAYAIIANGGKKVEPHFVELIKDRNGKIIYRRDNRECLSCNVSDSNLDIAILEIPKEDIYRVTDEASDYQITSFLTGAIDRSTGYAAKKLGKIIGGKTGTSNDSKDTWFVGFTPKIVVGSYVGYDTPKELGKRATGSNVVLPIFIDFMSNAYKDEPSLPFKVPDSIKLIAVDRATGKITPSGTVIEAFKVNNIQMLENEDMIDNRDNNDIFDYVPSKEDQSQEIY.

At 1-6 the chain is on the cytoplasmic side; it reads MYKSLF. The helical; Signal-anchor for type II membrane protein transmembrane segment at 7-27 threads the bilayer; the sequence is FCLKIFAVLILVGCGITAYII. At 28–790 the chain is on the periplasmic side; it reads YHYSRDLPDY…SKEDQSQEIY (763 aa). The transglycosylase stretch occupies residues 49 to 220; sequence TRIYSHDGKL…SELNPERNYA (172 aa). Glu-87 (proton donor; for transglycosylase activity) is an active-site residue. The tract at residues 398 to 711 is transpeptidase; that stretch reads DVIVVEPIKD…SNVVLPIFID (314 aa). The active-site Acyl-ester intermediate; for transpeptidase activity is Ser-457.

The protein in the N-terminal section; belongs to the glycosyltransferase 51 family. In the C-terminal section; belongs to the transpeptidase family.

The protein localises to the cell inner membrane. It catalyses the reaction [GlcNAc-(1-&gt;4)-Mur2Ac(oyl-L-Ala-gamma-D-Glu-L-Lys-D-Ala-D-Ala)](n)-di-trans,octa-cis-undecaprenyl diphosphate + beta-D-GlcNAc-(1-&gt;4)-Mur2Ac(oyl-L-Ala-gamma-D-Glu-L-Lys-D-Ala-D-Ala)-di-trans,octa-cis-undecaprenyl diphosphate = [GlcNAc-(1-&gt;4)-Mur2Ac(oyl-L-Ala-gamma-D-Glu-L-Lys-D-Ala-D-Ala)](n+1)-di-trans,octa-cis-undecaprenyl diphosphate + di-trans,octa-cis-undecaprenyl diphosphate + H(+). The catalysed reaction is Preferential cleavage: (Ac)2-L-Lys-D-Ala-|-D-Ala. Also transpeptidation of peptidyl-alanyl moieties that are N-acyl substituents of D-alanine.. The protein operates within cell wall biogenesis; peptidoglycan biosynthesis. In terms of biological role, cell wall formation. Synthesis of cross-linked peptidoglycan from the lipid intermediates. The enzyme has a penicillin-insensitive transglycosylase N-terminal domain (formation of linear glycan strands) and a penicillin-sensitive transpeptidase C-terminal domain (cross-linking of the peptide subunits). The chain is Penicillin-binding protein 1A (mrcA) from Rickettsia felis (strain ATCC VR-1525 / URRWXCal2) (Rickettsia azadi).